Consider the following 508-residue polypeptide: MGLPWYRVHTVVLNDPGRLLSVHIMHTALVAGWAGSMALYELAVFDPSDPVLDPMWRQGMFVIPFMTRLGITNSWGGWGIAGGTVTNPGLWSYEGVAGAHIAFSGLCFLAAIWHWVYWDLEVFYDERTGKPSLDLPKIFGIHLFLSGVACFGFGAFHVTGLYGPGIWVSDPYGLTGKVQPIKPTWGAEGFDPFVPGGIASHHIAAGTLGILAGLFHLSVRPPQRLYKGLRMGNIETVLSSSIAAVFFAAFVVAGTMWYGSATTPIELFGPTRYQWDQGYFQQEIYRRVSAGLAENQSLSETWSKIPEKLAFYDYIGNNPAKGGLFRAGSMDNGDGIAVGWLGHPIFRDNEGRELFVRRMPTFFETFPIILVDGDGIVRADVPFRRAESKYSVEQVGVTVAFYGGELNGVSYSDPATVKKYARRAQLGEIFELDRATLKSDGVFRSSPRGWFTFGHASFALLFFFGHIWHGARTLFRDVFAGIDPDLDAQVEFGAFQKLGDPTTRRQGA.

The next 6 membrane-spanning stretches (helical) occupy residues 21 to 36 (SVHI…WAGS), 101 to 115 (IAFS…IWHW), 140 to 156 (GIHL…FGAF), 203 to 218 (IAAG…FHLS), 237 to 252 (VLSS…AFVV), and 457 to 472 (SFAL…HGAR).

Belongs to the PsbB/PsbC family. PsbB subfamily. In terms of assembly, PSII is composed of 1 copy each of membrane proteins PsbA, PsbB, PsbC, PsbD, PsbE, PsbF, PsbH, PsbI, PsbJ, PsbK, PsbL, PsbM, PsbT, PsbX, PsbY, PsbZ, Psb30/Ycf12, at least 3 peripheral proteins of the oxygen-evolving complex and a large number of cofactors. It forms dimeric complexes. Binds multiple chlorophylls. PSII binds additional chlorophylls, carotenoids and specific lipids. is required as a cofactor.

The protein resides in the plastid membrane. In terms of biological role, one of the components of the core complex of photosystem II (PSII). It binds chlorophyll and helps catalyze the primary light-induced photochemical processes of PSII. PSII is a light-driven water:plastoquinone oxidoreductase, using light energy to abstract electrons from H(2)O, generating O(2) and a proton gradient subsequently used for ATP formation. The protein is Photosystem II CP47 reaction center protein of Cuscuta reflexa (Southern Asian dodder).